Here is a 377-residue protein sequence, read N- to C-terminus: Apelin receptor (377 aa).

Topologically, residues 1–28 (MEDDGYNYYGADNQSECDYADWKPSGAL) are extracellular. Asn13 carries an N-linked (GlcNAc...) asparagine glycan. Disulfide bonds link Cys17–Cys279 and Cys100–Cys179. A helical transmembrane segment spans residues 29–52 (IPAIYMLVFLLGTTGNGLVLWTVF). Topologically, residues 53 to 62 (RTSREKRRSA) are cytoplasmic. A helical membrane pass occupies residues 63 to 84 (DIFIASLAVADLTFVVTLPLWA). The Extracellular portion of the chain corresponds to 85–97 (TYTYREFDWPFGT). The helical transmembrane segment at 98 to 123 (FSCKLSSYLIFVNMYASVFCLTGLSF) threads the bilayer. Over 124-144 (DRYLAIVRPVANARLRLRVSG) the chain is Cytoplasmic. Residues 145-162 (AVATAVLWVLAALLAVPV) traverse the membrane as a helical segment. Residues 163 to 196 (MVFRSTDASENGTKIQCYMDYSMVATSNSEWAWE) are Extracellular-facing. N-linked (GlcNAc...) asparagine glycosylation occurs at Asn173. A helical membrane pass occupies residues 197–221 (VGLGVSSTAVGFVVPFTIMLTCYFF). At 222-244 (IAQTIAGHFRKERIEGLRKRRRL) the chain is on the cytoplasmic side. The chain crosses the membrane as a helical span at residues 245–268 (LSIIVVLVVTFALCWMPYHLVKTL). Residues 269-287 (YMLGSLLHWPCDFDIFLMN) are Extracellular-facing. A helical membrane pass occupies residues 288–310 (VFPYCTCISYVNSCLNPFLYAFF). Residues 311–377 (DPRFRQACTS…IPYSQETLVD (67 aa)) lie on the Cytoplasmic side of the membrane. Residues 334–377 (HSSSAEKSASYSSGHSQGPGPNMGKGGEQMHEKSIPYSQETLVD) form a disordered region. Over residues 335 to 349 (SSSAEKSASYSSGHS) the composition is skewed to low complexity.

This sequence belongs to the G-protein coupled receptor 1 family. As to quaternary structure, homodimer; dimerization inhibits APLNR-mediated G protein and beta-arrestin signaling pathways compared to monomeric APLNR. In terms of tissue distribution, expressed in coronary endothelial cells (at protein level). Expressed in the embryo, allantoic and endothelial precursor cells of the yolk sac at 8 days post-coitum (dpc). Expressed in the secondary heart field and somite at 8.25 dpc. Expressed in fetal allantoic endothelial cells at 9 dpc. Expressed in the allantoid and the invading fetal vasculature of the placenta at 9.5 dpc. Expressed in endothelial cells adjacent to syncytiotrophoblast cells at 10.5 dpc. Expressed weakly in the embryonic heart at 11.5 dpc. Expressed in the adult heart. Expressed in endothelial cells and cardiomyocytes and weakly expressed in fibroblasts.

It localises to the cell membrane. G protein-coupled receptor for peptide hormones apelin (APLN) and apelin receptor early endogenous ligand (APELA), that plays a role in the regulation of normal cardiovascular function and fluid homeostasis. When acting as apelin receptor, activates both G(i) protein pathway that inhibits adenylate cyclase activity, and the beta-arrestin pathway leading to internalization of the receptor. APLNR/APJ receptor is also activated by mechanical strech in a G-protein-independent fashion to induce beta-arrestin signaling leading to cardiac hypertrophy. However, the presence of apelin ligand blunts cardiac hypertrophic induction from APLNR/APJ on response to pathological stimuli. Plays a key role in early development such as gastrulation, blood vessels formation and heart morphogenesis by acting as a receptor for APELA hormone. May promote angioblast migration toward the embryonic midline, i.e. the position of the future vessel formation, during vasculogenesis. Promotes sinus venosus (SV)-derived endothelial cells migration into the developing heart to promote coronary blood vessel development. Also plays a role in various processes in adults such as regulation of blood vessel formation, blood pressure and heart contractility and protection from cardiac hypertrophy and heart failure. The polypeptide is Apelin receptor (Mus musculus (Mouse)).